Here is a 511-residue protein sequence, read N- to C-terminus: NAD(P)H-quinone oxidoreductase subunit 2 B, chloroplastic (511 aa).

13 consecutive transmembrane segments (helical) span residues 24–44, 57–77, 99–119, 124–144, 149–169, 183–203, 227–247, 295–315, 323–343, 354–374, 395–415, 418–438, and 484–504; these read LLLF…GLIL, IPWL…ALLF, IFQF…VEYI, MAIT…MFLC, LITI…LSGY, YLLM…WLYG, PGIS…LSPA, WHLL…LIAI, MLAY…IVGD, YMLF…LFGL, ALSL…AGFF, LHLF…IGLL, and MIVC…IIAI.

Belongs to the complex I subunit 2 family. NDH is composed of at least 16 different subunits, 5 of which are encoded in the nucleus.

The protein resides in the plastid. The protein localises to the chloroplast thylakoid membrane. The catalysed reaction is a plastoquinone + NADH + (n+1) H(+)(in) = a plastoquinol + NAD(+) + n H(+)(out). The enzyme catalyses a plastoquinone + NADPH + (n+1) H(+)(in) = a plastoquinol + NADP(+) + n H(+)(out). Its function is as follows. NDH shuttles electrons from NAD(P)H:plastoquinone, via FMN and iron-sulfur (Fe-S) centers, to quinones in the photosynthetic chain and possibly in a chloroplast respiratory chain. The immediate electron acceptor for the enzyme in this species is believed to be plastoquinone. Couples the redox reaction to proton translocation, and thus conserves the redox energy in a proton gradient. This chain is NAD(P)H-quinone oxidoreductase subunit 2 B, chloroplastic, found in Nandina domestica (Heavenly bamboo).